A 445-amino-acid polypeptide reads, in one-letter code: UDP-N-acetylmuramoylalanine--D-glutamate ligase (445 aa).

118–124 (GTNGKTT) contributes to the ATP binding site.

Belongs to the MurCDEF family.

It localises to the cytoplasm. The catalysed reaction is UDP-N-acetyl-alpha-D-muramoyl-L-alanine + D-glutamate + ATP = UDP-N-acetyl-alpha-D-muramoyl-L-alanyl-D-glutamate + ADP + phosphate + H(+). The protein operates within cell wall biogenesis; peptidoglycan biosynthesis. In terms of biological role, cell wall formation. Catalyzes the addition of glutamate to the nucleotide precursor UDP-N-acetylmuramoyl-L-alanine (UMA). This chain is UDP-N-acetylmuramoylalanine--D-glutamate ligase, found in Macrococcus caseolyticus (strain JCSC5402) (Macrococcoides caseolyticum).